We begin with the raw amino-acid sequence, 275 residues long: Light-independent protochlorophyllide reductase iron-sulfur ATP-binding protein (275 aa).

ATP is bound by residues 12 to 17 and K41; that span reads GIGKST. S16 is a binding site for Mg(2+). C97 and C131 together coordinate [4Fe-4S] cluster. 182 to 183 is an ATP binding site; it reads NR.

It belongs to the NifH/BchL/ChlL family. As to quaternary structure, homodimer. Protochlorophyllide reductase is composed of three subunits; BchL, BchN and BchB. Requires [4Fe-4S] cluster as cofactor.

It carries out the reaction chlorophyllide a + oxidized 2[4Fe-4S]-[ferredoxin] + 2 ADP + 2 phosphate = protochlorophyllide a + reduced 2[4Fe-4S]-[ferredoxin] + 2 ATP + 2 H2O. It participates in porphyrin-containing compound metabolism; bacteriochlorophyll biosynthesis (light-independent). In terms of biological role, component of the dark-operative protochlorophyllide reductase (DPOR) that uses Mg-ATP and reduced ferredoxin to reduce ring D of protochlorophyllide (Pchlide) to form chlorophyllide a (Chlide). This reaction is light-independent. The L component serves as a unique electron donor to the NB-component of the complex, and binds Mg-ATP. In Chlorobium phaeobacteroides (strain BS1), this protein is Light-independent protochlorophyllide reductase iron-sulfur ATP-binding protein.